The chain runs to 364 residues: Cell cycle control protein 50A (364 aa).

Residues M1 to P28 are disordered. A2 is subject to N-acetylalanine. The Cytoplasmic portion of the chain corresponds to A2–T49. A helical membrane pass occupies residues V50–V70. Residues T71–L328 lie on the Exoplasmic loop side of the membrane. 3 disulfides stabilise this stretch: C91–C104, C94–C102, and C157–C171. N-linked (GlcNAc...) asparagine glycosylation occurs at N98. N297 carries an N-linked (GlcNAc...) asparagine glycan. A helical membrane pass occupies residues G329–I349. At N350–I364 the chain is on the cytoplasmic side.

The protein belongs to the CDC50/LEM3 family. In terms of assembly, component of various P4-ATPase flippase complexes which consists of a catalytic alpha subunit and an accessory beta subunit. Interacts with ATP8A1 to form a flippase complex; this complex forms an intermediate phosphoenzyme. The ATP8A2:TMEM30A flippase complex has been purified, and ATP8B1:TMEM30A and ATP8B2:TMEM30A flippase complexes have been shown to form intermediate phosphoenzymes in vitro. Interacts with alpha subunits ATP8A1, ATP8B1, ATP8B2, ATP8B4, ATP10A, ATP10B, ATP10D, ATP11A, ATP11B and ATP11C. In terms of processing, N-glycosylated. Contains high mannose-type oligosaccharides. Expressed in photoreceptor cells; detected in retina outer segment (at protein level). Detected in hepatocytes liver sinusoidal endothelial cells and kidney brush border of the proximal tubules (at protein level). Expressed in brain (at protein level).

The protein resides in the membrane. It is found in the cell membrane. It localises to the golgi apparatus. The protein localises to the cytoplasmic vesicle. Its subcellular location is the secretory vesicle membrane. The protein resides in the apical cell membrane. Functionally, accessory component of a P4-ATPase flippase complex which catalyzes the hydrolysis of ATP coupled to the transport of aminophospholipids from the outer to the inner leaflet of various membranes and ensures the maintenance of asymmetric distribution of phospholipids. Phospholipid translocation also seems to be implicated in vesicle formation and in uptake of lipid signaling molecules. The beta subunit may assist in binding of the phospholipid substrate. Required for the proper folding, assembly and ER to Golgi exit of the ATP8A2:TMEM30A flippase complex. ATP8A2:TMEM30A may be involved in regulation of neurite outgrowth, and, reconstituted to liposomes, predomiminantly transports phosphatidylserine (PS) and to a lesser extent phosphatidylethanolamine (PE). The ATP8A1:TMEM30A flippase complex seems to play a role in regulation of cell migration probably involving flippase-mediated translocation of phosphatidylethanolamine (PE) at the plasma membrane. Required for the formation of the ATP8A2, ATP8B1 and ATP8B2 P-type ATPAse intermediate phosphoenzymes. Involved in uptake of platelet-activating factor (PAF). Can also mediate the export of alpha subunits ATP8A1, ATP8B1, ATP8B2, ATP8B4, ATP10A, ATP10B, ATP10D, ATP11A, ATP11B and ATP11C from the ER to other membrane localizations. In Mus musculus (Mouse), this protein is Cell cycle control protein 50A.